Consider the following 548-residue polypeptide: Eukaryotic translation initiation factor 3 subunit D (548 aa).

Residue lysine 53 is modified to N6-acetyllysine. A Phosphoserine modification is found at serine 161. Residues aspartate 285–proline 299 are RNA gate. Residues proline 523–alanine 548 form a disordered region. Serine 528 and serine 529 each carry phosphoserine. Residues serine 529–alanine 548 are compositionally biased toward acidic residues.

The protein belongs to the eIF-3 subunit D family. Component of the eukaryotic translation initiation factor 3 (eIF-3) complex, which is composed of 13 subunits: EIF3A, EIF3B, EIF3C, EIF3D, EIF3E, EIF3F, EIF3G, EIF3H, EIF3I, EIF3J, EIF3K, EIF3L and EIF3M. The eIF-3 complex appears to include 3 stable modules: module A is composed of EIF3A, EIF3B, EIF3G and EIF3I; module B is composed of EIF3F, EIF3H, and EIF3M; and module C is composed of EIF3C, EIF3D, EIF3E, EIF3K and EIF3L. EIF3C of module C binds EIF3B of module A and EIF3H of module B, thereby linking the three modules. EIF3J is a labile subunit that binds to the eIF-3 complex via EIF3B. The eIF-3 complex interacts with RPS6KB1 under conditions of nutrient depletion. Mitogenic stimulation leads to binding and activation of a complex composed of MTOR and RPTOR, leading to phosphorylation and release of RPS6KB1 and binding of EIF4B to eIF-3.

The protein resides in the cytoplasm. Functionally, mRNA cap-binding component of the eukaryotic translation initiation factor 3 (eIF-3) complex, a complex required for several steps in the initiation of protein synthesis of a specialized repertoire of mRNAs. The eIF-3 complex associates with the 40S ribosome and facilitates the recruitment of eIF-1, eIF-1A, eIF-2:GTP:methionyl-tRNAi and eIF-5 to form the 43S pre-initiation complex (43S PIC). The eIF-3 complex stimulates mRNA recruitment to the 43S PIC and scanning of the mRNA for AUG recognition. The eIF-3 complex is also required for disassembly and recycling of post-termination ribosomal complexes and subsequently prevents premature joining of the 40S and 60S ribosomal subunits prior to initiation. The eIF-3 complex specifically targets and initiates translation of a subset of mRNAs involved in cell proliferation, including cell cycling, differentiation and apoptosis, and uses different modes of RNA stem-loop binding to exert either translational activation or repression. In the eIF-3 complex, EIF3D specifically recognizes and binds the 7-methylguanosine cap of a subset of mRNAs. The chain is Eukaryotic translation initiation factor 3 subunit D from Bos taurus (Bovine).